Consider the following 476-residue polypeptide: Sulfate adenylyltransferase subunit 1 (476 aa).

A tr-type G domain is found at 24–239; it reads KSLLRFLTCG…LLETVDVDHE (216 aa). The G1 stretch occupies residues 33-40; it reads GSVDDGKS. 33 to 40 contributes to the GTP binding site; the sequence is GSVDDGKS. The tract at residues 91-95 is G2; that stretch reads GITID. Residues 112 to 115 form a G3 region; the sequence is DTPG. GTP is bound by residues 112 to 116 and 167 to 170; these read DTPGH and NKMD. The interval 167–170 is G4; that stretch reads NKMD. The interval 205–207 is G5; that stretch reads SAL.

Belongs to the TRAFAC class translation factor GTPase superfamily. Classic translation factor GTPase family. CysN/NodQ subfamily. Heterodimer composed of CysD, the smaller subunit, and CysN.

It catalyses the reaction sulfate + ATP + H(+) = adenosine 5'-phosphosulfate + diphosphate. The protein operates within sulfur metabolism; hydrogen sulfide biosynthesis; sulfite from sulfate: step 1/3. Functionally, with CysD forms the ATP sulfurylase (ATPS) that catalyzes the adenylation of sulfate producing adenosine 5'-phosphosulfate (APS) and diphosphate, the first enzymatic step in sulfur assimilation pathway. APS synthesis involves the formation of a high-energy phosphoric-sulfuric acid anhydride bond driven by GTP hydrolysis by CysN coupled to ATP hydrolysis by CysD. The chain is Sulfate adenylyltransferase subunit 1 from Vibrio campbellii (strain ATCC BAA-1116).